Reading from the N-terminus, the 374-residue chain is Isocitrate dehydrogenase [NAD] catalytic subunit 6, mitochondrial (374 aa).

The N-terminal 44 residues, 1–44 (MTMTAFLARRLIGNGSSQILGTSSSSSGPFISVSRAFFSSSTPI), are a transit peptide targeting the mitochondrion. The substrate site is built by R127, R137, R158, and D245. Positions 245, 269, and 273 each coordinate Mg(2+).

The protein belongs to the isocitrate and isopropylmalate dehydrogenases family. In terms of assembly, heterooligomer of catalytic and regulatory subunits. Mg(2+) serves as cofactor. Mn(2+) is required as a cofactor. Ubiquitous. Predominantly expressed in leaves.

The protein localises to the mitochondrion. It carries out the reaction D-threo-isocitrate + NAD(+) = 2-oxoglutarate + CO2 + NADH. Catalytic subunit of the NAD(+)-dependent isocitrate dehydrogenase involved in the oxidative decarboxylation of isocitrate to 2-oxoglutarate. Performs an essential role in the oxidative function of the citric acid cycle. The sequence is that of Isocitrate dehydrogenase [NAD] catalytic subunit 6, mitochondrial (IDH6) from Arabidopsis thaliana (Mouse-ear cress).